A 705-amino-acid polypeptide reads, in one-letter code: MTKFGFLRLSYEKQDTLLKLLILSMAAVLSFSTRLFAVLRFESVIHEFDPYFNYRTTRFLAEEGFYKFHNWFDDRAWYPLGRIIGGTIYPGLMITSAAIYHVLHFFHITIDIRNVCVFLAPLFSSFTTIVTYHLTKELKDAGAGLLAAAMIAVVPGYISRSVAGSYDNEGIAIFCMLLTYYMWIKAVKTGSICWAAKCALAYFYMVSSWGGYVFLINLIPLHVLVLMLTGRFSHRIYVAYCTVYCLGTILSMQISFVGFQPVLSSEHMAAFGVFGLCQIHAFVDYLRSKLNPQQFEVLFRSVISLVGFVLLTVGALLMLTGKISPWTGRFYSLLDPSYAKNNIPIIASVSEHQPTTWSSYYFDLQLLVFMFPVGLYYCFSNLSDARIFIIMYGVTSMYFSAVMVRLMLVLAPVMCILSGIGVSQVLSTYMKNLDISRPDKKSKKQQDSTYPIKNEVASGMILVMAFFLITYTFHSTWVTSEAYSSPSIVLSARGGDGSRIIFDDFREAYYWLRHNTPEDAKVMSWWDYGYQITAMANRTILVDNNTWNNTHISRVGQAMASTEEKAYEIMRELDVSYVLVIFGGLTGYSSDDINKFLWMVRIGGSTDTGKHIKENDYYTPTGEFRVDREGSPVLLNCLMYKMCYYRFGQVYTEAKRPPGFDRVRNAEIGNKDFELDVLEEAYTTEHWLVRIYKVKDLDNRGLSRT.

Residues 1 to 17 (MTKFGFLRLSYEKQDTL) are Cytoplasmic-facing. A helical membrane pass occupies residues 18–38 (LKLLILSMAAVLSFSTRLFAV). The Lumenal segment spans residues 39 to 119 (LRFESVIHEF…IDIRNVCVFL (81 aa)). The short motif at 47 to 49 (EFD) is the DXD motif 1 element. Position 49 (Asp-49) interacts with Mn(2+). Residues 120 to 138 (APLFSSFTTIVTYHLTKEL) form a helical membrane-spanning segment. Residues 139 to 140 (KD) are Cytoplasmic-facing. Residues 141–158 (AGAGLLAAAMIAVVPGYI) form a helical membrane-spanning segment. The Lumenal segment spans residues 159–169 (SRSVAGSYDNE). Positions 167 and 169 each coordinate Mn(2+). Positions 167–169 (DNE) match the DXD motif 2 motif. The chain crosses the membrane as a helical span at residues 170-189 (GIAIFCMLLTYYMWIKAVKT). Topologically, residues 190–191 (GS) are cytoplasmic. A helical membrane pass occupies residues 192-206 (ICWAAKCALAYFYMV). Residues 207-211 (SSWGG) are Lumenal-facing. Residues 212-228 (YVFLINLIPLHVLVLML) traverse the membrane as a helical segment. The Cytoplasmic portion of the chain corresponds to 229 to 233 (TGRFS). A helical membrane pass occupies residues 234–259 (HRIYVAYCTVYCLGTILSMQISFVGF). The Lumenal portion of the chain corresponds to 260–267 (QPVLSSEH). Residues 268–287 (MAAFGVFGLCQIHAFVDYLR) form a helical membrane-spanning segment. Residues 288 to 300 (SKLNPQQFEVLFR) are Cytoplasmic-facing. Residues 301–321 (SVISLVGFVLLTVGALLMLTG) form a helical membrane-spanning segment. At 322–356 (KISPWTGRFYSLLDPSYAKNNIPIIASVSEHQPTT) the chain is on the lumenal side. The SVSE motif signature appears at 348–351 (SVSE). Residues 357–379 (WSSYYFDLQLLVFMFPVGLYYCF) form a helical membrane-spanning segment. Residues 380–385 (SNLSDA) lie on the Cytoplasmic side of the membrane. A helical membrane pass occupies residues 386–402 (RIFIIMYGVTSMYFSAV). Topologically, residues 403–406 (MVRL) are lumenal. Arg-405 serves as a coordination point for dolichyl diphosphooligosaccharide. The helical transmembrane segment at 407 to 428 (MLVLAPVMCILSGIGVSQVLST) threads the bilayer. The Cytoplasmic portion of the chain corresponds to 429 to 453 (YMKNLDISRPDKKSKKQQDSTYPIK). Residues 454-473 (NEVASGMILVMAFFLITYTF) form a helical membrane-spanning segment. The Lumenal portion of the chain corresponds to 474 to 705 (HSTWVTSEAY…DLDNRGLSRT (232 aa)). An interacts with target acceptor peptide in protein substrate region spans residues 525–527 (WWD). The short motif at 525 to 529 (WWDYG) is the WWDYG motif element. Tyr-530 is a binding site for dolichyl diphosphooligosaccharide. Residues Asn-537 and Asn-544 are each glycosylated (N-linked (GlcNAc...) asparagine). N-linked (GlcNAc...) (high mannose) asparagine glycosylation is present at Asn-548. The DK motif motif lies at 592 to 599 (DINKFLWM).

It belongs to the STT3 family. In terms of assembly, component of the oligosaccharyltransferase (OST) complex. There are 2 OST complexes, OST-A and OST-B, which contain STT3A or STT3B as catalytic subunit, respectively. OST-A and OST-B contain common core subunits RPN1, RPN2, OST48, OST4, DAD1 and TMEM258, and OST-A contains DC2/OSTC and KRTCAP2/KCP2 specific accessory subunits. OST-A complex assembly occurs through the formation of 3 subcomplexes. Subcomplex 1 contains RPN1 and TMEM258, subcomplex 2 contains the OST-A-specific subunits STT3A, DC2/OSTC, and KCP2 as well as the core subunit OST4, and subcomplex 3 contains RPN2, DAD1, and OST48. The OST-A complex can form stable complexes with the Sec61 complex or with both the Sec61 and TRAP complexes. The cofactor is Mg(2+). Mn(2+) is required as a cofactor. Expressed at high levels in placenta, liver, muscle and pancreas, and at very low levels in brain, lung and kidney. Expressed in skin fibroblasts (at protein level).

The protein resides in the endoplasmic reticulum. Its subcellular location is the endoplasmic reticulum membrane. The enzyme catalyses a di-trans,poly-cis-dolichyl diphosphooligosaccharide + L-asparaginyl-[protein] = N(4)-(oligosaccharide-(1-&gt;4)-N-acetyl-beta-D-glucosaminyl-(1-&gt;4)-N-acetyl-beta-D-glucosaminyl)-L-asparaginyl-[protein] + a di-trans,poly-cis-dolichyl diphosphate + H(+). The protein operates within protein modification; protein glycosylation. Its activity is regulated as follows. STT3A, but not STT3B, is specifically inhibited by the N-glycosylation inhibitor NGI-235, which prevents productive binding pose of the glycan donor in the active site of STT3A. Catalytic subunit of the oligosaccharyl transferase (OST) complex that catalyzes the initial transfer of a defined glycan (Glc(3)Man(9)GlcNAc(2) in eukaryotes) from the lipid carrier dolichol-pyrophosphate to an asparagine residue within an Asn-X-Ser/Thr consensus motif in nascent polypeptide chains, the first step in protein N-glycosylation. N-glycosylation occurs cotranslationally and the complex associates with the Sec61 complex at the channel-forming translocon complex that mediates protein translocation across the endoplasmic reticulum (ER). All subunits are required for a maximal enzyme activity. This subunit contains the active site and the acceptor peptide and donor lipid-linked oligosaccharide (LLO) binding pockets. STT3A is present in the majority of OST complexes and mediates cotranslational N-glycosylation of most sites on target proteins, while STT3B-containing complexes are required for efficient post-translational glycosylation and mediate glycosylation of sites that have been skipped by STT3A. STT3A-containing OST-A complex is also required to prevent hyperglycosylation of some target proteins by preventing glycosylation of facultative sites before folding of target proteins is completed. In Homo sapiens (Human), this protein is Dolichyl-diphosphooligosaccharide--protein glycosyltransferase subunit STT3A.